The chain runs to 354 residues: UDP-2,3-diacetamido-2,3-dideoxy-D-glucuronate 2-epimerase (354 aa).

The protein belongs to the UDP-N-acetylglucosamine 2-epimerase family.

It carries out the reaction UDP-2,3-diacetamido-2,3-dideoxy-alpha-D-glucuronate = UDP-2,3-diacetamido-2,3-dideoxy-alpha-D-mannuronate. It functions in the pathway bacterial outer membrane biogenesis; LPS O-antigen biosynthesis. Functionally, plays a role in the biosynthesis of B-band O antigen for serotype O5. Catalyzes the epimerization of UDP-2,3-diacetamido-2,3-dideoxy-alpha-D-glucuronic acid (UDP-alpha-D-GlcNAc3NAcA) to UDP-2,3-diacetamido-2,3-dideoxy-alpha-D-mannuronic acid (UDP-alpha-D-ManNAc3NAcA). Exhibits high specificity towards the substrate as UDP-alpha-D-GlcNAc, UDP-alpha-D-GlcNAcA (UDP-2-acetamido-2-deoxy-alpha-D-glucuronic acid) and UDP-alpha-D-GlcNAc3NAc (UDP-2,3-diacetamido-2,3-dideoxy-alpha-D-glucose) cannot act as substrates. This chain is UDP-2,3-diacetamido-2,3-dideoxy-D-glucuronate 2-epimerase, found in Pseudomonas aeruginosa (strain ATCC 15692 / DSM 22644 / CIP 104116 / JCM 14847 / LMG 12228 / 1C / PRS 101 / PAO1).